A 99-amino-acid chain; its full sequence is DNA-directed RNA polymerase subunit omega (99 aa).

It belongs to the RNA polymerase subunit omega family. As to quaternary structure, the RNAP catalytic core consists of 2 alpha, 1 beta, 1 beta' and 1 omega subunit. When a sigma factor is associated with the core the holoenzyme is formed, which can initiate transcription.

It catalyses the reaction RNA(n) + a ribonucleoside 5'-triphosphate = RNA(n+1) + diphosphate. Promotes RNA polymerase assembly. Latches the N- and C-terminal regions of the beta' subunit thereby facilitating its interaction with the beta and alpha subunits. This chain is DNA-directed RNA polymerase subunit omega, found in Stenotrophomonas maltophilia (strain K279a).